Consider the following 446-residue polypeptide: Exodeoxyribonuclease 7 large subunit (446 aa).

The protein belongs to the XseA family. In terms of assembly, heterooligomer composed of large and small subunits.

The protein localises to the cytoplasm. The enzyme catalyses Exonucleolytic cleavage in either 5'- to 3'- or 3'- to 5'-direction to yield nucleoside 5'-phosphates.. In terms of biological role, bidirectionally degrades single-stranded DNA into large acid-insoluble oligonucleotides, which are then degraded further into small acid-soluble oligonucleotides. This chain is Exodeoxyribonuclease 7 large subunit, found in Streptococcus agalactiae serotype Ia (strain ATCC 27591 / A909 / CDC SS700).